We begin with the raw amino-acid sequence, 212 residues long: Cytidylate kinase (212 aa).

Residue 7–15 (GPAASGKGT) participates in ATP binding.

Belongs to the cytidylate kinase family. Type 1 subfamily.

The protein localises to the cytoplasm. It carries out the reaction CMP + ATP = CDP + ADP. The catalysed reaction is dCMP + ATP = dCDP + ADP. This chain is Cytidylate kinase, found in Rhodopseudomonas palustris (strain ATCC BAA-98 / CGA009).